Here is a 269-residue protein sequence, read N- to C-terminus: Lck-interacting transmembrane adapter 1 (269 aa).

Residues 1-7 are Extracellular-facing; sequence MRPPVPS. The chain crosses the membrane as a helical; Signal-anchor for type III membrane protein span at residues 8–28; the sequence is APLALWVLGCFSLLLWLWALC. 2 S-palmitoyl cysteine lipidation sites follow: Cys28 and Cys31. Over 29–269 the chain is Cytoplasmic; the sequence is TACHRKRAQR…VYESIKEMGL (241 aa). A disordered region spans residues 102–133; that stretch reads STRSQVPNSAFPPRQLPRAPPAAPATAPSTSS. Residues 115–124 are compositionally biased toward pro residues; it reads RQLPRAPPAA. Phosphotyrosine occurs at positions 137, 175, and 207. The tract at residues 137 to 140 is interaction with GRB2; the sequence is YSNV. 2 interaction with CSK regions span residues 175 to 178 and 207 to 210; these read YACI and YSRV. Residues Tyr242 and Tyr261 each carry the phosphotyrosine; by LYN or LCK modification. An interaction with LCK and PIK3R1 region spans residues 242–245; the sequence is YEAI. The interaction with LCK, PLCG2 and PIK3R1 stretch occupies residues 261–264; that stretch reads YESI. Position 263 is a phosphoserine (Ser263).

In terms of assembly, when phosphorylated in response to TCR stimulation and/or CD4 costimulation, interacts with LCK, CSK, FYN, PTPN11/SHP2, GRB2, PIK3R1 and GRAP2. When phosphorylated in response to BCR activation, interacts with LYN, PIK3R1, PLCG2 and GRB2. Post-translationally, palmitoylation of Cys-28 and Cys-31 is required for raft targeting. In terms of processing, phosphorylated on tyrosines upon TCR activation and/or CD4 coreceptor stimulation, or upon BCR stimulation; which leads to the recruitment of SH2-containing proteins. As to expression, expressed in spleen and lung. Present in primary B-cells and peripheral T-cells (at protein level).

The protein resides in the cell membrane. In terms of biological role, involved in BCR (B-cell antigen receptor)-mediated signaling in B-cells and TCR (T-cell antigen receptor)-mediated T-cell signaling in T-cells. In absence of TCR signaling, may be involved in CD4-mediated inhibition of T-cell activation. Couples activation of these receptors and their associated kinases with distal intracellular events such as calcium mobilization or MAPK activation through the recruitment of PLCG2, GRB2, GRAP2, and other signaling molecules. This Mus musculus (Mouse) protein is Lck-interacting transmembrane adapter 1 (Lime1).